The sequence spans 417 residues: Gamma-glutamyl phosphate reductase (417 aa).

Belongs to the gamma-glutamyl phosphate reductase family.

It is found in the cytoplasm. It carries out the reaction L-glutamate 5-semialdehyde + phosphate + NADP(+) = L-glutamyl 5-phosphate + NADPH + H(+). The protein operates within amino-acid biosynthesis; L-proline biosynthesis; L-glutamate 5-semialdehyde from L-glutamate: step 2/2. In terms of biological role, catalyzes the NADPH-dependent reduction of L-glutamate 5-phosphate into L-glutamate 5-semialdehyde and phosphate. The product spontaneously undergoes cyclization to form 1-pyrroline-5-carboxylate. In Klebsiella pneumoniae subsp. pneumoniae (strain ATCC 700721 / MGH 78578), this protein is Gamma-glutamyl phosphate reductase.